The following is a 452-amino-acid chain: Mitochondrial import inner membrane translocase subunit TIM44 (452 aa).

T128 is subject to Phosphothreonine. ATP is bound at residue 166-173 (SGEKLGKT). K177 carries the N6-succinyllysine modification. The residue at position 180 (S180) is a Phosphoserine. K217 bears the N6-succinyllysine mark.

It belongs to the Tim44 family. As to quaternary structure, probable component of the PAM complex at least composed of a mitochondrial HSP70 protein, GRPEL1 or GRPEL2, TIMM44, TIMM16/PAM16 and TIMM14/DNAJC19. The complex interacts with the TIMM23 component of the TIM23 complex. Interacts with SLC25A4/ANT1 and SLC25A5/ANT2; leading to inhibit the presequence translocase TIMM23, thereby promoting stabilization of PINK1.

It localises to the mitochondrion inner membrane. Essential component of the PAM complex, a complex required for the translocation of transit peptide-containing proteins from the inner membrane into the mitochondrial matrix in an ATP-dependent manner. Recruits mitochondrial HSP70 to drive protein translocation into the matrix using ATP as an energy source. The polypeptide is Mitochondrial import inner membrane translocase subunit TIM44 (Timm44) (Mus musculus (Mouse)).